The chain runs to 199 residues: Small ribosomal subunit protein uS5 (199 aa).

The disordered stretch occupies residues 1–28 (MARTPNTDRRQRGGDDQRNRSPRSDERD). The S5 DRBM domain maps to 31 to 94 (FLDKLVHINR…DQAKRTMIKV (64 aa)).

It belongs to the universal ribosomal protein uS5 family. In terms of assembly, part of the 30S ribosomal subunit. Contacts proteins S4 and S8.

Its function is as follows. With S4 and S12 plays an important role in translational accuracy. Functionally, located at the back of the 30S subunit body where it stabilizes the conformation of the head with respect to the body. This is Small ribosomal subunit protein uS5 from Rhodospirillum rubrum (strain ATCC 11170 / ATH 1.1.1 / DSM 467 / LMG 4362 / NCIMB 8255 / S1).